Reading from the N-terminus, the 152-residue chain is UPF0756 membrane protein JDM1_1594 (152 aa).

The next 4 membrane-spanning stretches (helical) occupy residues 25-45 (ATVVVLLIKLIPNTSKLLTTI), 52-72 (WGVTVITVAILIPIATGQIGF), 85-105 (WIAVACGVLVSVLSFHGVGLL), and 115-135 (LVFGTIMGVVLLKGIAAGPII).

It belongs to the UPF0756 family.

The protein localises to the cell membrane. The protein is UPF0756 membrane protein JDM1_1594 of Lactiplantibacillus plantarum (strain JDM1) (Lactobacillus plantarum).